The following is a 355-amino-acid chain: Peptide chain release factor 1 (355 aa).

An N5-methylglutamine modification is found at Gln-231. The span at 280–291 (SERLAKESEARK) shows a compositional bias: basic and acidic residues. Residues 280–303 (SERLAKESEARKSQVGSGDRSERI) are disordered.

This sequence belongs to the prokaryotic/mitochondrial release factor family. Post-translationally, methylated by PrmC. Methylation increases the termination efficiency of RF1.

Its subcellular location is the cytoplasm. Peptide chain release factor 1 directs the termination of translation in response to the peptide chain termination codons UAG and UAA. This chain is Peptide chain release factor 1, found in Campylobacter jejuni subsp. jejuni serotype O:6 (strain 81116 / NCTC 11828).